Reading from the N-terminus, the 49-residue chain is MRVNVTLACTECGDRNYITTKNKRNNPERVEMKKFCSRENKQTLHRETK.

This sequence belongs to the bacterial ribosomal protein bL33 family.

The sequence is that of Large ribosomal subunit protein bL33A from Staphylococcus aureus (strain COL).